The following is a 101-amino-acid chain: NAD(P)H-quinone oxidoreductase subunit 4L, chloroplastic (101 aa).

Transmembrane regions (helical) follow at residues 2–22, 32–52, and 61–81; these read MFEL…YGLI, ICLE…SDLF, and IFAI…LSIL.

This sequence belongs to the complex I subunit 4L family. NDH is composed of at least 16 different subunits, 5 of which are encoded in the nucleus.

Its subcellular location is the plastid. It localises to the chloroplast thylakoid membrane. The enzyme catalyses a plastoquinone + NADH + (n+1) H(+)(in) = a plastoquinol + NAD(+) + n H(+)(out). The catalysed reaction is a plastoquinone + NADPH + (n+1) H(+)(in) = a plastoquinol + NADP(+) + n H(+)(out). NDH shuttles electrons from NAD(P)H:plastoquinone, via FMN and iron-sulfur (Fe-S) centers, to quinones in the photosynthetic chain and possibly in a chloroplast respiratory chain. The immediate electron acceptor for the enzyme in this species is believed to be plastoquinone. Couples the redox reaction to proton translocation, and thus conserves the redox energy in a proton gradient. This Lolium perenne (Perennial ryegrass) protein is NAD(P)H-quinone oxidoreductase subunit 4L, chloroplastic.